The following is a 156-amino-acid chain: Small ribosomal subunit protein uS7 (156 aa).

Belongs to the universal ribosomal protein uS7 family. In terms of assembly, part of the 30S ribosomal subunit. Contacts proteins S9 and S11.

Its function is as follows. One of the primary rRNA binding proteins, it binds directly to 16S rRNA where it nucleates assembly of the head domain of the 30S subunit. Is located at the subunit interface close to the decoding center, probably blocks exit of the E-site tRNA. The sequence is that of Small ribosomal subunit protein uS7 from Prochlorococcus marinus (strain MIT 9303).